The primary structure comprises 142 residues: Large ribosomal subunit protein uL11 (142 aa).

It belongs to the universal ribosomal protein uL11 family. Part of the ribosomal stalk of the 50S ribosomal subunit. Interacts with L10 and the large rRNA to form the base of the stalk. L10 forms an elongated spine to which L12 dimers bind in a sequential fashion forming a multimeric L10(L12)X complex. In terms of processing, one or more lysine residues are methylated.

Forms part of the ribosomal stalk which helps the ribosome interact with GTP-bound translation factors. The sequence is that of Large ribosomal subunit protein uL11 from Baumannia cicadellinicola subsp. Homalodisca coagulata.